Here is a 178-residue protein sequence, read N- to C-terminus: Protein Vhl (178 aa).

Belongs to the VHL family. In terms of assembly, part of a complex with Cul2, Roc1a/Rbx1 and the elongin BC complex. Interacts with sima/Hif1a. Interacts with itself. Interacts with mgr and betaTub56D/tubulin beta-1 chain. Interacts with tubulin alpha-beta heterodimers by itself or in complex with mgr. Interacts with microtubules (MTs).

It functions in the pathway protein modification; protein ubiquitination. Its function is as follows. Involved in development of tracheal vasculature. Probably involved in halting cell migration at the end of vascular tube outgrowth. Possesses E3 ubiquitin ligase activity when in complex with Elongin BC complex, Cul2 and Rox1a/Rbx1, and can target sima/Hif1a for ubiquitination. May play a critical role in promoting microtubule stabilization when tubulins are correctly folded by the prefoldin complex. If tubulin is incorrectly folded, may promote its degradation. This chain is Protein Vhl, found in Drosophila melanogaster (Fruit fly).